The chain runs to 245 residues: 3-deoxy-manno-octulosonate cytidylyltransferase (245 aa).

This sequence belongs to the KdsB family.

The protein localises to the cytoplasm. It catalyses the reaction 3-deoxy-alpha-D-manno-oct-2-ulosonate + CTP = CMP-3-deoxy-beta-D-manno-octulosonate + diphosphate. The protein operates within nucleotide-sugar biosynthesis; CMP-3-deoxy-D-manno-octulosonate biosynthesis; CMP-3-deoxy-D-manno-octulosonate from 3-deoxy-D-manno-octulosonate and CTP: step 1/1. It functions in the pathway bacterial outer membrane biogenesis; lipopolysaccharide biosynthesis. In terms of biological role, activates KDO (a required 8-carbon sugar) for incorporation into bacterial lipopolysaccharide in Gram-negative bacteria. The sequence is that of 3-deoxy-manno-octulosonate cytidylyltransferase from Desulfatibacillum aliphaticivorans.